We begin with the raw amino-acid sequence, 969 residues long: UvrABC system protein A (969 aa).

32–39 (GLSGSGKS) serves as a coordination point for ATP. The C4-type zinc finger occupies 258–286 (CPNGHPLAVDDLEPRSFSFNSPYGACPEC). ABC transporter domains follow at residues 316 to 599 (WSAG…KDSI) and 619 to 948 (VDRK…KFLA). 652–659 (GVSGSGKS) provides a ligand contact to ATP. The C4-type zinc finger occupies 751-777 (CEACTGDGTIKIEMNFLPDVYVPCEVC).

Belongs to the ABC transporter superfamily. UvrA family. In terms of assembly, forms a heterotetramer with UvrB during the search for lesions.

It is found in the cytoplasm. Functionally, the UvrABC repair system catalyzes the recognition and processing of DNA lesions. UvrA is an ATPase and a DNA-binding protein. A damage recognition complex composed of 2 UvrA and 2 UvrB subunits scans DNA for abnormalities. When the presence of a lesion has been verified by UvrB, the UvrA molecules dissociate. The chain is UvrABC system protein A from Mycobacterium leprae (strain TN).